Here is a 202-residue protein sequence, read N- to C-terminus: Small ribosomal subunit protein uS4c (202 aa).

The disordered stretch occupies residues 18–45; sequence LPGLTRKMAKRKSPPGQHGAASKKPSQY. The S4 RNA-binding domain occupies 90 to 152; it reads MRLDTTIFRL…SRSRKLIEGY (63 aa).

It belongs to the universal ribosomal protein uS4 family. Part of the 30S ribosomal subunit. Contacts protein S5. The interaction surface between S4 and S5 is involved in control of translational fidelity.

The protein resides in the plastid. Its subcellular location is the chloroplast. In terms of biological role, one of the primary rRNA binding proteins, it binds directly to 16S rRNA where it nucleates assembly of the body of the 30S subunit. With S5 and S12 plays an important role in translational accuracy. The protein is Small ribosomal subunit protein uS4c (rps4) of Nephroselmis olivacea (Green alga).